The primary structure comprises 243 residues: Peptidyl-tRNA hydrolase (243 aa).

Tyr14 provides a ligand contact to tRNA. Residue His19 is the Proton acceptor of the active site. Residues Phe64, Asn66, and Asn112 each contribute to the tRNA site. Positions 184-225 (AAQTRPAEKAKPLATAKPKEGEARTSGGSVAEVGAPPPSPTG) are disordered. The segment covering 189-206 (PAEKAKPLATAKPKEGEA) has biased composition (basic and acidic residues).

Belongs to the PTH family. Monomer.

It is found in the cytoplasm. It carries out the reaction an N-acyl-L-alpha-aminoacyl-tRNA + H2O = an N-acyl-L-amino acid + a tRNA + H(+). In terms of biological role, hydrolyzes ribosome-free peptidyl-tRNAs (with 1 or more amino acids incorporated), which drop off the ribosome during protein synthesis, or as a result of ribosome stalling. Its function is as follows. Catalyzes the release of premature peptidyl moieties from peptidyl-tRNA molecules trapped in stalled 50S ribosomal subunits, and thus maintains levels of free tRNAs and 50S ribosomes. This Rhodospirillum rubrum (strain ATCC 11170 / ATH 1.1.1 / DSM 467 / LMG 4362 / NCIMB 8255 / S1) protein is Peptidyl-tRNA hydrolase.